Here is a 397-residue protein sequence, read N- to C-terminus: Ubiquitin-like modifier-activating enzyme 5 (397 aa).

ATP-binding residues include glycine 77, aspartate 98, lysine 121, asparagine 144, and asparagine 178. Residues cysteine 220 and cysteine 223 each contribute to the Zn(2+) site. Cysteine 244 (glycyl thioester intermediate) is an active-site residue. Cysteine 297 and cysteine 302 together coordinate Zn(2+). The UFM1-interacting sequence (UIS) signature appears at 329–341; that stretch reads VVHEDNDWGIELV. Positions 342–372 are linker; sequence SEVSEEELKAASGPVPDLPEGIKVAYTIPIT. Residues 382–397 carry the UFC1-binding sequence (UFC) motif; that stretch reads DSEQSLDELMAQMKNL.

It belongs to the ubiquitin-activating E1 family. UBA5 subfamily. Homodimer; homodimerization is required for ufm1 activation. Interacts (via UIS motif) with ufm1; binds ufm1 via a trans-binding mechanism in which ufm1 interacts with distinct sites in both subunits of the uba5 homodimer. Interacts (via C-terminus) with ufc1.

The protein localises to the cytoplasm. It localises to the nucleus. Its subcellular location is the endoplasmic reticulum membrane. It is found in the golgi apparatus. Its function is as follows. E1-like enzyme which specifically catalyzes the first step in ufmylation. Activates ufm1 by first adenylating its C-terminal glycine residue with ATP, and thereafter linking this residue to the side chain of a cysteine residue in E1, yielding a ufm1-E1 thioester and free AMP. Activates ufm1 via a trans-binding mechanism, in which ufm1 interacts with distinct sites in both subunits of the uba5 homodimer. Trans-binding also promotes stabilization of the uba5 homodimer, and enhances ATP-binding. Transfer of ufm1 from uba5 to the E2-like enzyme UFC1 also takes place using a trans mechanism. Ufmylation plays a key role in various processes, such as ribosome recycling, response to DNA damage, interferon response or reticulophagy (also called ER-phagy). The sequence is that of Ubiquitin-like modifier-activating enzyme 5 from Xenopus laevis (African clawed frog).